We begin with the raw amino-acid sequence, 401 residues long: Alkane 1-monooxygenase (401 aa).

The Cytoplasmic segment spans residues 1–20; sequence MLEKHRVLDSAPEYVDKKKY. The helical transmembrane segment at 21–39 threads the bilayer; the sequence is LWILSTLWPATPMIGIWLA. The Periplasmic portion of the chain corresponds to 40 to 41; it reads NE. Residues 42–62 form a helical membrane-spanning segment; sequence TGWGIFYGLVLLVWYGALPLL. Residues 63–88 lie on the Cytoplasmic side of the membrane; it reads DAMFGEDFNNPPEEVVPKLEKERYYR. The chain crosses the membrane as a helical span at residues 89 to 111; it reads VLTYLTVPMHYAALIVSAWWVGT. Over 112 to 113 the chain is Periplasmic; sequence QP. A helical transmembrane segment spans residues 114-134; the sequence is MSWLEIGALALSLGIVNGLAL. Residues 135–228 are Cytoplasmic-facing; the sequence is NTGHELGHKK…QSVWSFDNEI (94 aa). Fe cation is bound by residues H138, H142, H168, H172, and H173. Residues 229 to 249 form a helical membrane-spanning segment; the sequence is LQPMIITVILYAVLLALFGPK. M250 is a topological domain (periplasmic). A helical transmembrane segment spans residues 251-270; that stretch reads LVFLPIQMAFGWWQLTSANY. At 271–401 the chain is on the cytoplasmic side; sequence IEHYGLLRQK…HSSSTSAVAS (131 aa). Residues H312, H315, and H316 each contribute to the Fe cation site.

It belongs to the fatty acid desaturase type 1 family. AlkB subfamily. Requires Fe(3+) as cofactor.

Its subcellular location is the cell inner membrane. It catalyses the reaction octane + 2 reduced [rubredoxin] + O2 + 2 H(+) = 2 oxidized [rubredoxin] + octan-1-ol + H2O. Its pathway is hydrocarbon metabolism; alkane degradation. Its function is as follows. Catalyzes the hydroxylation of n-alkanes and fatty acids in the presence of a NADH-rubredoxin reductase and rubredoxin. This chain is Alkane 1-monooxygenase (alkB), found in Ectopseudomonas oleovorans (Pseudomonas oleovorans).